Reading from the N-terminus, the 500-residue chain is Nucleolar and spindle-associated protein 1 (500 aa).

4 disordered regions span residues 48–204 (KNET…NFKK), 241–299 (TKKS…ASKS), 319–353 (VRFSEATKDNEHKRSLIKTPARKSSSFLAVTPESE), and 365–500 (ELLP…VPVK). The span at 82–92 (THRRGRGRKPI) shows a compositional bias: basic residues. Over residues 113-127 (NMASSIDRTQQQNCT) the composition is skewed to polar residues. Residues 264 to 274 (SRLSLLSPLPR) show a composition bias toward low complexity. Residues 276–298 (TGASPSRTPMSQRRSCRSSTASK) show a composition bias toward polar residues. A compositionally biased stretch (basic and acidic residues) spans 323 to 332 (EATKDNEHKR). Residues 380-392 (ITLNTTTQPSPAT) show a composition bias toward polar residues. A compositionally biased stretch (basic and acidic residues) spans 442–451 (PWGESKENKP). The segment covering 452 to 469 (DPNSNVSVLKNNYKQPHL) has biased composition (polar residues).

The protein belongs to the NUSAP family. In terms of assembly, interacts with DNA, microtubules, ipo7, kpna2 and kpnb1. Microtubule stabilization is inhibited by ipo7 and kpna2, while microtubule bundling is inhibited by kpnb1. Active GTP-bound ran causes dissociation of ipo7 and kpnb1.

The protein resides in the cytoplasm. The protein localises to the nucleus. It is found in the cytoskeleton. It localises to the spindle. Microtubule-associated protein with the capacity to bundle and stabilize microtubules. May associate with chromosomes and promote the organization of meiotic or mitotic spindle microtubules around them. The protein is Nucleolar and spindle-associated protein 1 (nusap1) of Xenopus tropicalis (Western clawed frog).